An 831-amino-acid polypeptide reads, in one-letter code: Periplasmic nitrate reductase (831 aa).

Positions 1-29 form a signal peptide, tat-type signal; it reads MTVTRRDFVRHQALATAAAAAGVAVPAAA. Residues 41-97 enclose the 4Fe-4S Mo/W bis-MGD-type domain; it reads LVWSKAPCRFCGTGCSVNVATKEGRVVATHGDIKSPVNRGLNCVKGYFLSKVMYGED. Residues Cys-48, Cys-51, Cys-55, and Cys-83 each coordinate [4Fe-4S] cluster. Residues Lys-85, Gln-152, Asn-177, Cys-181, 214–221, 245–249, 264–266, Met-375, Gln-379, Asn-485, 511–512, Lys-534, Asp-561, and 721–730 contribute to the Mo-bis(molybdopterin guanine dinucleotide) site; these read WGSNMAEM, STYEH, QSD, SD, and TGRVIEHWHS. A substrate-binding site is contributed by Trp-797. Mo-bis(molybdopterin guanine dinucleotide) contacts are provided by Asn-805 and Lys-822.

Belongs to the prokaryotic molybdopterin-containing oxidoreductase family. NasA/NapA/NarB subfamily. As to quaternary structure, component of the periplasmic nitrate reductase NapAB complex composed of NapA and NapB. Requires [4Fe-4S] cluster as cofactor. The cofactor is Mo-bis(molybdopterin guanine dinucleotide). In terms of processing, predicted to be exported by the Tat system. The position of the signal peptide cleavage has not been experimentally proven.

The protein localises to the periplasm. The catalysed reaction is 2 Fe(II)-[cytochrome] + nitrate + 2 H(+) = 2 Fe(III)-[cytochrome] + nitrite + H2O. Functionally, catalytic subunit of the periplasmic nitrate reductase complex NapAB. Receives electrons from NapB and catalyzes the reduction of nitrate to nitrite. The sequence is that of Periplasmic nitrate reductase from Saccharophagus degradans (strain 2-40 / ATCC 43961 / DSM 17024).